We begin with the raw amino-acid sequence, 116 residues long: Large ribosomal subunit protein uL18 (116 aa).

This sequence belongs to the universal ribosomal protein uL18 family. In terms of assembly, part of the 50S ribosomal subunit; part of the 5S rRNA/L5/L18/L25 subcomplex. Contacts the 5S and 23S rRNAs.

Functionally, this is one of the proteins that bind and probably mediate the attachment of the 5S RNA into the large ribosomal subunit, where it forms part of the central protuberance. The chain is Large ribosomal subunit protein uL18 from Psychromonas ingrahamii (strain DSM 17664 / CCUG 51855 / 37).